The chain runs to 215 residues: Interleukin-12 subunit alpha (215 aa).

The first 22 residues, 1-22, serve as a signal peptide directing secretion; it reads MCQSRYLLFLATLVLLNHLTSA. 3 disulfide bridges follow: Cys-33–Cys-106, Cys-60–Cys-192, and Cys-81–Cys-119. Residues Asn-35, Asn-89, and Asn-167 are each glycosylated (N-linked (GlcNAc...) asparagine).

The protein belongs to the IL-6 superfamily. In terms of assembly, heterodimer with IL12B; disulfide-linked. This heterodimer is known as interleukin IL-12. Heterodimer with EBI3/IL27B; not disulfide-linked. This heterodimer is known as interleukin IL-35. Interacts with NBR1; this interaction promotes IL-12 secretion.

It localises to the secreted. Functionally, heterodimerizes with IL12B to form the IL-12 cytokine or with EBI3/IL27B to form the IL-35 cytokine. IL-12 is primarily produced by professional antigen-presenting cells (APCs) such as B-cells and dendritic cells (DCs) as well as macrophages and granulocytes and regulates T-cell and natural killer-cell responses, induces the production of interferon-gamma (IFN-gamma), favors the differentiation of T-helper 1 (Th1) cells and is an important link between innate resistance and adaptive immunity. Mechanistically, exerts its biological effects through a receptor composed of IL12R1 and IL12R2 subunits. Binding to the receptor results in the rapid tyrosine phosphorylation of a number of cellular substrates including the JAK family kinases TYK2 and JAK2. In turn, recruited STAT4 gets phosphorylated and translocates to the nucleus where it regulates cytokine/growth factor responsive genes. As part of IL-35, plays essential roles in maintaining the immune homeostasis of the liver microenvironment and also functions as an immune-suppressive cytokine. Mediates biological events through unconventional receptors composed of IL12RB2 and gp130/IL6ST heterodimers or homodimers. Signaling requires the transcription factors STAT1 and STAT4, which form a unique heterodimer that binds to distinct DNA sites. This Rattus norvegicus (Rat) protein is Interleukin-12 subunit alpha (Il12a).